The sequence spans 514 residues: 2,3-bisphosphoglycerate-independent phosphoglycerate mutase (514 aa).

Residues aspartate 14 and serine 64 each contribute to the Mn(2+) site. The active-site Phosphoserine intermediate is serine 64. Substrate contacts are provided by residues histidine 125, 155–156, arginine 187, arginine 193, 263–266, and lysine 337; these read RD and RADR. Residues aspartate 404, histidine 408, aspartate 445, histidine 446, and histidine 463 each coordinate Mn(2+).

It belongs to the BPG-independent phosphoglycerate mutase family. In terms of assembly, monomer. Requires Mn(2+) as cofactor.

It carries out the reaction (2R)-2-phosphoglycerate = (2R)-3-phosphoglycerate. The protein operates within carbohydrate degradation; glycolysis; pyruvate from D-glyceraldehyde 3-phosphate: step 3/5. In terms of biological role, catalyzes the interconversion of 2-phosphoglycerate and 3-phosphoglycerate. This chain is 2,3-bisphosphoglycerate-independent phosphoglycerate mutase, found in Hahella chejuensis (strain KCTC 2396).